A 397-amino-acid chain; its full sequence is Exodeoxyribonuclease 7 large subunit (397 aa).

This sequence belongs to the XseA family. Heterooligomer composed of large and small subunits.

The protein resides in the cytoplasm. It catalyses the reaction Exonucleolytic cleavage in either 5'- to 3'- or 3'- to 5'-direction to yield nucleoside 5'-phosphates.. Its function is as follows. Bidirectionally degrades single-stranded DNA into large acid-insoluble oligonucleotides, which are then degraded further into small acid-soluble oligonucleotides. The protein is Exodeoxyribonuclease 7 large subunit of Anaplasma marginale (strain Florida).